The chain runs to 196 residues: Small ribosomal subunit protein uS4c (196 aa).

A disordered region spans residues 17–36; that stretch reads ALPGLTRKTPKSGSNLKKKF. Positions 89-150 constitute an S4 RNA-binding domain; it reads MRLDNILFRL…NQRSKRLIQN (62 aa).

This sequence belongs to the universal ribosomal protein uS4 family. Part of the 30S ribosomal subunit. Contacts protein S5. The interaction surface between S4 and S5 is involved in control of translational fidelity.

Its subcellular location is the plastid. It is found in the chloroplast. Functionally, one of the primary rRNA binding proteins, it binds directly to 16S rRNA where it nucleates assembly of the body of the 30S subunit. In terms of biological role, with S5 and S12 plays an important role in translational accuracy. This chain is Small ribosomal subunit protein uS4c (rps4), found in Phyllostachys flexuosa (Drooping timber bamboo).